Reading from the N-terminus, the 522-residue chain is 2-isopropylmalate synthase (522 aa).

The region spanning 5-267 is the Pyruvate carboxyltransferase domain; that stretch reads VIIFDTTLRD…ETGINAKEIH (263 aa). The Mn(2+) site is built by D14, H202, H204, and N238. The regulatory domain stretch occupies residues 392-522; it reads QLQQLVVQSD…MHKNRELGGV (131 aa).

This sequence belongs to the alpha-IPM synthase/homocitrate synthase family. LeuA type 1 subfamily. In terms of assembly, homodimer. Mn(2+) serves as cofactor.

The protein localises to the cytoplasm. It catalyses the reaction 3-methyl-2-oxobutanoate + acetyl-CoA + H2O = (2S)-2-isopropylmalate + CoA + H(+). The protein operates within amino-acid biosynthesis; L-leucine biosynthesis; L-leucine from 3-methyl-2-oxobutanoate: step 1/4. Catalyzes the condensation of the acetyl group of acetyl-CoA with 3-methyl-2-oxobutanoate (2-ketoisovalerate) to form 3-carboxy-3-hydroxy-4-methylpentanoate (2-isopropylmalate). This Shewanella sp. (strain MR-7) protein is 2-isopropylmalate synthase.